Here is a 565-residue protein sequence, read N- to C-terminus: Putative ribonucleoside-diphosphate reductase large subunit (565 aa).

Substrate-binding positions include Ser-60, 74 to 75 (SC), Gly-103, 256 to 260 (NLCNE), and 400 to 404 (PNANS). An intrachain disulfide couples Cys-75 to Cys-273. Residue Asn-256 is the Proton acceptor of the active site. The Cysteine radical intermediate role is filled by Cys-258. Glu-260 functions as the Proton acceptor in the catalytic mechanism.

Belongs to the ribonucleoside diphosphate reductase large chain family. As to quaternary structure, heterotetramer composed of a homodimer of the large subunit (R1) and a homodimer of the small subunit (R2). Larger multisubunit protein complex are also active, composed of (R1)n(R2)n.

The enzyme catalyses a 2'-deoxyribonucleoside 5'-diphosphate + [thioredoxin]-disulfide + H2O = a ribonucleoside 5'-diphosphate + [thioredoxin]-dithiol. Under complex allosteric control mediated by deoxynucleoside triphosphates and ATP binding. The type of nucleotide bound at the specificity site determines substrate preference. It seems probable that ATP makes the enzyme reduce CDP and UDP, dGTP favors ADP reduction and dTTP favors GDP reduction. Its function is as follows. Ribonucleoside-diphosphate reductase holoenzyme provides the precursors necessary for viral DNA synthesis. Allows virus growth in non-dividing cells. Catalyzes the biosynthesis of deoxyribonucleotides from the corresponding ribonucleotides. The sequence is that of Putative ribonucleoside-diphosphate reductase large subunit from Frog virus 3 (isolate Goorha) (FV-3).